The primary structure comprises 402 residues: Coiled-coil domain-containing protein 188 (402 aa).

3 disordered regions span residues 1–30 (MEGLKTLGPCGHPHPQCPPTPASSSHGGGL), 50–74 (HSVQSQRPFPVPGAGGSGPTVEGEA), and 108–131 (HPGSNQGAPRQGGSIGSGTRPCPC). Positions 154 to 189 (GLLGSAEQSFLQLEQENHSLKRQNQELREQLGALLG) form a coiled coil. The chain crosses the membrane as a helical span at residues 347-363 (LLLGALLVWTAAYVYVV).

It is found in the membrane. The chain is Coiled-coil domain-containing protein 188 from Homo sapiens (Human).